The following is a 1863-amino-acid chain: Breast cancer type 1 susceptibility protein homolog (1863 aa).

Met-1 carries the post-translational modification N-acetylmethionine. Residues 24–65 (CPICLELIKEPVSTKCDHIFCKFCMLKLLNQKKGPSQCPLCK) form an RING-type zinc finger. A Glycyl lysine isopeptide (Lys-Gly) (interchain with G-Cter in SUMO2) cross-link involves residue Lys-109. A Phosphoserine modification is found at Ser-114. The segment at 231–267 (TDVTNTEHHQPSNNDLNTTEKRATERHPEKYQGSSVS) is disordered. The span at 248-260 (TTEKRATERHPEK) shows a compositional bias: basic and acidic residues. A Glycyl lysine isopeptide (Lys-Gly) (interchain with G-Cter in SUMO2) cross-link involves residue Lys-301. A disordered region spans residues 306 to 338 (NKSKQPGLARSQHNRWAGSKETCNDRQTPSTEK). A Glycyl lysine isopeptide (Lys-Gly) (interchain with G-Cter in SUMO2) cross-link involves residue Lys-339. Residues Ser-395, Ser-398, Ser-423, and Ser-434 each carry the phosphoserine modification. Residues Lys-443, Lys-459, and Lys-519 each participate in a glycyl lysine isopeptide (Lys-Gly) (interchain with G-Cter in SUMO2) cross-link. Ser-551 bears the Phosphoserine mark. Residues Lys-583 and Lys-654 each participate in a glycyl lysine isopeptide (Lys-Gly) (interchain with G-Cter in SUMO2) cross-link. Positions 650–735 (IKKKKYNQMP…LPREEKEEKL (86 aa)) are disordered. A phosphoserine mark is found at Ser-694, Ser-708, and Ser-725. Residues 705-716 (APGSFTNCSNTS) are compositionally biased toward polar residues. Glycyl lysine isopeptide (Lys-Gly) (interchain with G-Cter in SUMO2) cross-links involve residues Lys-734 and Lys-739. A phosphoserine mark is found at Ser-753 and Ser-840. Glycyl lysine isopeptide (Lys-Gly) (interchain with G-Cter in SUMO2) cross-links involve residues Lys-918 and Lys-987. Ser-988 bears the Phosphoserine; by CHEK2 mark. Ser-1009 is modified (phosphoserine). The segment at 1045–1066 (NEVGSSTNEVGSSINEVGSSDE) is disordered. A Glycyl lysine isopeptide (Lys-Gly) (interchain with G-Cter in SUMO2) cross-link involves residue Lys-1079. Phosphoserine occurs at positions 1143, 1189, 1191, 1211, 1217, 1218, 1280, 1328, 1336, 1342, and 1387. The segment at 1181 to 1216 (VQRGELSRSPSPFTHTHLAQGYRRGAKKLESSEENL) is disordered. Residues 1322-1394 (KQMRHQSESQ…LSSQSDILTT (73 aa)) form a disordered region. Residues 1342-1360 (SDDEERGTDLEENNQEEQG) show a composition bias toward acidic residues. Residues 1373-1394 (ESETSVSEDCSGLSSQSDILTT) are compositionally biased toward polar residues. Thr-1394 is subject to Phosphothreonine. The interval 1397–1424 (RDTMQDNLIKLQQEMAELEAVLEQHGSQ) is interaction with PALB2. Ser-1423, Ser-1457, Ser-1524, and Ser-1542 each carry phosphoserine. Residues 1440-1504 (EDLRNPEQST…RSSPSKCPSL (65 aa)) are disordered. Over residues 1445–1470 (PEQSTSEKAVLTSQKSSEYPISQNPE) the composition is skewed to polar residues. Disordered stretches follow at residues 1540-1597 (EESG…PSST) and 1610-1642 (SAQS…LTAS). A compositionally biased stretch (polar residues) spans 1610-1624 (SAQSPAAAQTTNTAG). 2 BRCT domains span residues 1642–1736 (STER…DFEV) and 1756–1855 (QDRK…TYLI).

Heterodimer with BARD1. Part of the BRCA1-associated genome surveillance complex (BASC), which contains BRCA1, MSH2, MSH6, MLH1, ATM, BLM, PMS2 and the MRE11-RAD50-NBN protein (MRN) complex. This association could be a dynamic process changing throughout the cell cycle and within subnuclear domains. Component of the BRCA1-A complex, at least composed of BRCA1, BARD1, UIMC1/RAP80, ABRAXAS1, BRCC3/BRCC36, BABAM2 and BABAM1/NBA1. Interacts (via the BRCT domains) with ABRAXAS1 (phosphorylated form); this is important for recruitment to sites of DNA damage. Can form a heterotetramer with two molecules of ABRAXAS1 (phosphorylated form). Component of the BRCA1-RBBP8 complex. Interacts (via the BRCT domains) with RBBP8 ('Ser-327' phosphorylated form); the interaction ubiquitinates RBBP8, regulates CHEK1 activation, and involves RBBP8 in BRCA1-dependent G2/M checkpoint control on DNA damage. Associates with RNA polymerase II holoenzyme. Interacts with SMC1A, NELFB, DCLRE1C, CLSPN. CHEK1, CHEK2, BAP1, BRCC3, UBXN1 and PCLAF. Interacts (via BRCT domains) with BRIP1 (phosphorylated form). Interacts with FANCD2 (ubiquitinated form). Interacts with H2AX (phosphorylated on 'Ser-140'). Interacts (via the BRCT domains) with ACACA (phosphorylated form); the interaction prevents dephosphorylation of ACACA. Part of a BRCA complex containing BRCA1, BRCA2 and PALB2. Interacts directly with PALB2; the interaction is essential for its function in HRR. Interacts directly with BRCA2; the interaction occurs only in the presence of PALB2 which serves as the bridging protein. Interacts (via the BRCT domains) with LMO4; the interaction represses the transcriptional activity of BRCA1. Interacts (via the BRCT domains) with CCAR2 (via N-terminus); the interaction represses the transcriptional activator activity of BRCA1. Interacts with EXD2. Interacts (via C-terminus) with DHX9; this interaction is direct and links BRCA1 to the RNA polymerase II holoenzyme. Interacts with DNA helicase ZGRF1; the interaction is increased following DNA damage induction. Phosphorylated in response to IR, UV, and various stimuli that cause checkpoint activation, probably by ATM or ATR. Phosphorylation at Ser-988 by CHEK2 regulates mitotic spindle assembly. Phosphorylation by AURKA regulates centrosomal microtubule nucleation. Post-translationally, autoubiquitinated, undergoes 'Lys-6'-linked polyubiquitination. 'Lys-6'-linked polyubiquitination does not promote degradation.

It is found in the nucleus. The protein resides in the chromosome. It localises to the cytoplasm. It carries out the reaction S-ubiquitinyl-[E2 ubiquitin-conjugating enzyme]-L-cysteine + [acceptor protein]-L-lysine = [E2 ubiquitin-conjugating enzyme]-L-cysteine + N(6)-ubiquitinyl-[acceptor protein]-L-lysine.. The protein operates within protein modification; protein ubiquitination. Its function is as follows. E3 ubiquitin-protein ligase that specifically mediates the formation of 'Lys-6'-linked polyubiquitin chains and plays a central role in DNA repair by facilitating cellular responses to DNA damage. It is unclear whether it also mediates the formation of other types of polyubiquitin chains. The BRCA1-BARD1 heterodimer coordinates a diverse range of cellular pathways such as DNA damage repair, ubiquitination and transcriptional regulation to maintain genomic stability. Regulates centrosomal microtubule nucleation. Required for appropriate cell cycle arrests after ionizing irradiation in both the S-phase and the G2 phase of the cell cycle. Required for FANCD2 targeting to sites of DNA damage. Inhibits lipid synthesis by binding to inactive phosphorylated ACACA and preventing its dephosphorylation. Contributes to homologous recombination repair (HRR) via its direct interaction with PALB2, fine-tunes recombinational repair partly through its modulatory role in the PALB2-dependent loading of BRCA2-RAD51 repair machinery at DNA breaks. Component of the BRCA1-RBBP8 complex which regulates CHEK1 activation and controls cell cycle G2/M checkpoints on DNA damage via BRCA1-mediated ubiquitination of RBBP8. Acts as a transcriptional activator. This chain is Breast cancer type 1 susceptibility protein homolog (BRCA1), found in Pongo pygmaeus (Bornean orangutan).